A 232-amino-acid polypeptide reads, in one-letter code: UPF0235 protein At5g63440 (232 aa).

The protein belongs to the UPF0235 family. As to quaternary structure, interacts with CTN.

It is found in the nucleus speckle. In terms of biological role, may play a role during early embryonic development. Probably involved in pre-mRNA splicing. In Arabidopsis thaliana (Mouse-ear cress), this protein is UPF0235 protein At5g63440.